The following is a 484-amino-acid chain: Monocarboxylate transporter 2 (484 aa).

The Cytoplasmic segment spans residues 1–16 (MPSEPSAPLPQPLPPD). Residues 17 to 37 (GGWGWVVVCASFISIGFSYAF) form a helical membrane-spanning segment. Residues 38–60 (PKAVTVFFKDIQEIFNTTSSQIA) lie on the Extracellular side of the membrane. A helical membrane pass occupies residues 61-81 (WISSIMLAVMYAGGPISSVLV). Residues 82-90 (NNYGSRPVV) lie on the Cytoplasmic side of the membrane. The helical transmembrane segment at 91 to 111 (IVGGLLCCIGMILASYSNSVI) threads the bilayer. At 112 to 116 (ELYLT) the chain is on the extracellular side. Residues 117–137 (VGFIGGLGLAFNLQPALTIIG) form a helical membrane-spanning segment. The Cytoplasmic portion of the chain corresponds to 138–149 (KYFYRRRPLANG). The helical transmembrane segment at 150 to 170 (CAMAGSPVFLSTLAPFNQYLF) threads the bilayer. The Extracellular portion of the chain corresponds to 171-174 (NNYG). A helical transmembrane segment spans residues 175–195 (WKGSFLILGGIFLHSCVAGCL). At 196–245 (MRPVGPSPNTKKSKSKVGSRHDSTLKKASKVSTAQKVNRFLDFSLFMHRG) the chain is on the cytoplasmic side. A helical membrane pass occupies residues 246–266 (FLIYLSGNVILFLGIFAPIIF). Over 267–281 (LAQYAKHIGVDDYNS) the chain is Extracellular. The chain crosses the membrane as a helical span at residues 282 to 302 (AFLLSVMAFIDMFARPSVGLI). Residues 303 to 311 (ANTSLIRPR) lie on the Cytoplasmic side of the membrane. The helical transmembrane segment at 312–332 (IQYLFSSAIIFTGICHLLCPL) threads the bilayer. Residues 333–337 (ATTYS) lie on the Extracellular side of the membrane. Residues 338–358 (ALVVYVVFFGLGFGSISSLLF) form a helical membrane-spanning segment. The Cytoplasmic segment spans residues 359 to 372 (ECLMDIVGATRFSS). The helical transmembrane segment at 373-393 (AVGLTTIVECCPVLFGPPLAG) threads the bilayer. Residues 394–405 (KLLDITGEYKYL) are Extracellular-facing. The chain crosses the membrane as a helical span at residues 406–426 (YIASGTVVLVSGTYLLIGNAI). Topologically, residues 427 to 484 (NYRLLDKERKREKAKKKKSASHASREMEALNRSKQDEVTVKASNAHNPPSDRDKESNI) are cytoplasmic. Positions 438 to 484 (EKAKKKKSASHASREMEALNRSKQDEVTVKASNAHNPPSDRDKESNI) are disordered. 2 stretches are compositionally biased toward basic and acidic residues: residues 449-465 (ASRE…DEVT) and 475-484 (PSDRDKESNI).

The protein belongs to the major facilitator superfamily. Monocarboxylate porter (TC 2.A.1.13) family. Homodimer. Interacts with GRID2IP. Interacts with EMB; interaction mediates SLC16A7 targeting to the plasma membrane. Interacts with isoform 2 of BSG. Detected in testis and in spermatozoa (at protein level).

The protein resides in the cell membrane. It is found in the cytoplasm. The protein localises to the basolateral cell membrane. The catalysed reaction is (S)-lactate(in) + H(+)(in) = (S)-lactate(out) + H(+)(out). It catalyses the reaction 3-methyl-2-oxobutanoate(out) + H(+)(out) = 3-methyl-2-oxobutanoate(in) + H(+)(in). The enzyme catalyses acetoacetate(out) + H(+)(out) = acetoacetate(in) + H(+)(in). It carries out the reaction (R)-3-hydroxybutanoate(out) + H(+)(out) = (R)-3-hydroxybutanoate(in) + H(+)(in). The catalysed reaction is 4-methyl-2-oxopentanoate(out) + H(+)(out) = 4-methyl-2-oxopentanoate(in) + H(+)(in). It catalyses the reaction pyruvate(out) + H(+)(out) = pyruvate(in) + H(+)(in). The enzyme catalyses (S)-3-hydroxybutanoate(out) + H(+)(out) = (S)-3-hydroxybutanoate(in) + H(+)(in). Its activity is regulated as follows. Transport activity exhibits steep dependence on substrate concentration. Substrate concentration sensitivity of SLC16A7 arises from the strong inter-subunit cooperativity of the SLC16A7 dimer during transport. Inhibited by AR-C155858. Proton-coupled monocarboxylate symporter. Catalyzes the rapid transport across the plasma membrane of monocarboxylates such as L-lactate, pyruvate and ketone bodies, acetoacetate, beta-hydroxybutyrate and acetate. Dimerization is functionally required and both subunits work cooperatively in transporting substrate. This is Monocarboxylate transporter 2 (Slc16a7) from Mus musculus (Mouse).